Reading from the N-terminus, the 597-residue chain is Elongation factor 4 (597 aa).

In terms of domain architecture, tr-type G spans 2-184; sequence KHIRNFSIIA…NIVTAIPPPE (183 aa). GTP contacts are provided by residues 14–19 and 131–134; these read DHGKST and NKID.

Belongs to the TRAFAC class translation factor GTPase superfamily. Classic translation factor GTPase family. LepA subfamily.

It is found in the cell inner membrane. The enzyme catalyses GTP + H2O = GDP + phosphate + H(+). In terms of biological role, required for accurate and efficient protein synthesis under certain stress conditions. May act as a fidelity factor of the translation reaction, by catalyzing a one-codon backward translocation of tRNAs on improperly translocated ribosomes. Back-translocation proceeds from a post-translocation (POST) complex to a pre-translocation (PRE) complex, thus giving elongation factor G a second chance to translocate the tRNAs correctly. Binds to ribosomes in a GTP-dependent manner. This is Elongation factor 4 from Vibrio atlanticus (strain LGP32) (Vibrio splendidus (strain Mel32)).